We begin with the raw amino-acid sequence, 406 residues long: GTPase Obg (406 aa).

The region spanning 1–159 (MKFVDEVSIF…RDLKLELKVL (159 aa)) is the Obg domain. The interval 126–149 (GNTRFKSSTNRAPRQTTPGKPGES) is disordered. Positions 129-143 (RFKSSTNRAPRQTTP) are enriched in polar residues. In terms of domain architecture, OBG-type G spans 160-333 (ADVGLLGLPN…ICRDIMHYLE (174 aa)). GTP contacts are provided by residues 166 to 173 (GLPNAGKS), 191 to 195 (FTTLV), 213 to 216 (DIPG), 283 to 286 (NKMD), and 314 to 316 (SAI). Mg(2+) contacts are provided by serine 173 and threonine 193. Positions 376–406 (SGVRSVDDIDEDDDFFDDEDDDGPEIIYVRD) are disordered. Over residues 383–399 (DIDEDDDFFDDEDDDGP) the composition is skewed to acidic residues.

This sequence belongs to the TRAFAC class OBG-HflX-like GTPase superfamily. OBG GTPase family. In terms of assembly, monomer. Mg(2+) serves as cofactor.

It is found in the cytoplasm. Its function is as follows. An essential GTPase which binds GTP, GDP and possibly (p)ppGpp with moderate affinity, with high nucleotide exchange rates and a fairly low GTP hydrolysis rate. Plays a role in control of the cell cycle, stress response, ribosome biogenesis and in those bacteria that undergo differentiation, in morphogenesis control. This chain is GTPase Obg, found in Ectopseudomonas mendocina (strain ymp) (Pseudomonas mendocina).